Here is a 307-residue protein sequence, read N- to C-terminus: Mediator of RNA polymerase II transcription subunit 18 (307 aa).

The segment covering 117 to 126 has biased composition (polar residues); the sequence is TNFNSTNEDQ. The interval 117–162 is disordered; sequence TNFNSTNEDQNNSKHTEDTVNESRNSDDIIDVDMDASPAPSNESCS.

This sequence belongs to the Mediator complex subunit 18 family. As to quaternary structure, component of the Mediator complex, which is composed of at least 21 subunits that form three structurally distinct submodules. The Mediator head module contains MED6, MED8, MED11, SRB4/MED17, SRB5/MED18, ROX3/MED19, SRB2/MED20 and SRB6/MED22, the middle module contains MED1, MED4, NUT1/MED5, MED7, CSE2/MED9, NUT2/MED10, SRB7/MED21 and SOH1/MED31, and the tail module contains MED2, PGD1/MED3, RGR1/MED14, GAL11/MED15 and SIN4/MED16. The head and the middle modules interact directly with RNA polymerase II, whereas the elongated tail module interacts with gene-specific regulatory proteins. SRB5/MED18 interacts directly with MED8 and SRB2/MED20.

The protein resides in the nucleus. In terms of biological role, component of the Mediator complex, a coactivator involved in the regulated transcription of nearly all RNA polymerase II-dependent genes. Mediator functions as a bridge to convey information from gene-specific regulatory proteins to the basal RNA polymerase II transcription machinery. The Mediator complex, having a compact conformation in its free form, is recruited to promoters by direct interactions with regulatory proteins and serves for the assembly of a functional preinitiation complex with RNA polymerase II and the general transcription factors. The Mediator complex unfolds to an extended conformation and partially surrounds RNA polymerase II, specifically interacting with the unphosphorylated form of the C-terminal domain (CTD) of RNA polymerase II. The Mediator complex dissociates from the RNA polymerase II holoenzyme and stays at the promoter when transcriptional elongation begins. This Saccharomyces cerevisiae (strain ATCC 204508 / S288c) (Baker's yeast) protein is Mediator of RNA polymerase II transcription subunit 18 (SRB5).